Reading from the N-terminus, the 502-residue chain is Maturase K (502 aa).

It belongs to the intron maturase 2 family. MatK subfamily.

The protein resides in the plastid. Its subcellular location is the chloroplast. In terms of biological role, usually encoded in the trnK tRNA gene intron. Probably assists in splicing its own and other chloroplast group II introns. This chain is Maturase K, found in Ipomoea purpurea (Common morning glory).